The chain runs to 750 residues: MTISPPEREANGKIVVDRDPVKTSFERWGKPGHFSRSLAKGPNTTTWIWNLHADAHDFDSHTNDLEDISRKVFSAHFGQLAVIFIWLSGMYFHGARFSNYEAWLSDPTHIKPSAQVVWPIVGQEILNGDVGGGFQGVQITSGFFQLWRASGIVNEQQLYTTAIGGLIAAGLMFFAGWFHYHKAAPKLEWFQNAESMMNHHLAGLLGLGSLSWAGHQIHVSLPVNQLLDAGVDPKEIPLPHEFVMNRELMAQLYPSFAKGLAPFFTLNWGEYSDFLTFRGGLNPVTGGLWLTDTVHHHVAIAVLFIVAGHMYRTNWGIGHSMKEILEAHKGPFTGEGHKGLYEILTTSWHAQLGLNLALMGSLSIIVAHHMYAMPPYPYLATDYGTQLSLFTHHMWIGGFCIVGGAAHAAIFMVRDYDPTNNYNNLLDRVIRHRDAIISHLNWVCIFLGFHSFGLYIHNDTMSALGRPQDMFSDTAIQLQPVFAQFVQNRNYLAPGFSAPNALASSSAVWGGDVVAVGGKVAMMPIQLGTSDFLVHHIHAFTIHVTVLILLKGVLFARSSRLIPDKANLGFRFPCDGPGRGGTCQVSAWDHVFLGLFWMYNCLSIVIFHFSWKMQSDVWGSVTAQGVSHITGGNFAQSANTINGWLRDFLWAQASQVIQSYGSALSAYGLMFLGAHFVWAFSLMFLFSGRGYWQELIESIVWAHNKLKVAPAIQPRALSITQGRAVGVAHYLLGGIATTWAFFLARIIAVG.

Transmembrane regions (helical) follow at residues 72-95 (VFSA…FHGA), 158-181 (LYTT…FHYH), 197-221 (MNHH…HVSL), 293-311 (TVHH…GHMY), 348-371 (WHAQ…HHMY), 387-413 (LSLF…IFMV), 435-457 (AIIS…LYIH), and 532-550 (FLVH…LILL). 2 residues coordinate [4Fe-4S] cluster: Cys574 and Cys583. 2 helical membrane passes run 590-611 (HVFL…HFSW) and 664-686 (LSAY…MFLF). His675 contributes to the chlorophyll a' binding site. Residues Met683 and Tyr691 each coordinate chlorophyll a. Trp692 contacts phylloquinone. The helical transmembrane segment at 724–744 (AVGVAHYLLGGIATTWAFFLA) threads the bilayer.

It belongs to the PsaA/PsaB family. As to quaternary structure, the PsaA/B heterodimer binds the P700 chlorophyll special pair and subsequent electron acceptors. PSI consists of a core antenna complex that captures photons, and an electron transfer chain that converts photonic excitation into a charge separation. The eukaryotic PSI reaction center is composed of at least 11 subunits. P700 is a chlorophyll a/chlorophyll a' dimer, A0 is one or more chlorophyll a, A1 is one or both phylloquinones and FX is a shared 4Fe-4S iron-sulfur center. serves as cofactor.

The protein localises to the plastid. It localises to the chloroplast thylakoid membrane. It catalyses the reaction reduced [plastocyanin] + hnu + oxidized [2Fe-2S]-[ferredoxin] = oxidized [plastocyanin] + reduced [2Fe-2S]-[ferredoxin]. PsaA and PsaB bind P700, the primary electron donor of photosystem I (PSI), as well as the electron acceptors A0, A1 and FX. PSI is a plastocyanin-ferredoxin oxidoreductase, converting photonic excitation into a charge separation, which transfers an electron from the donor P700 chlorophyll pair to the spectroscopically characterized acceptors A0, A1, FX, FA and FB in turn. Oxidized P700 is reduced on the lumenal side of the thylakoid membrane by plastocyanin. This chain is Photosystem I P700 chlorophyll a apoprotein A1, found in Mesostigma viride (Green alga).